A 404-amino-acid polypeptide reads, in one-letter code: Glucoside xylosyltransferase 1 (404 aa).

Residues 1–6 (MRRYLR) are Cytoplasmic-facing. A helical; Signal-anchor for type II membrane protein membrane pass occupies residues 7–29 (VVGLCLACGFCSLLYAFSQLAVS). Residues 30 to 404 (LEEGAAGGRR…NRYDTPPKER (375 aa)) lie on the Lumenal side of the membrane. An N-linked (GlcNAc...) asparagine glycan is attached at asparagine 201.

Belongs to the glycosyltransferase 8 family.

The protein resides in the membrane. It catalyses the reaction 3-O-(beta-D-glucosyl)-L-seryl-[EGF-like domain protein] + UDP-alpha-D-xylose = 3-O-[alpha-D-xylosyl-(1-&gt;3)-beta-D-glucosyl]-L-seryl-[EGF-like domain protein] + UDP + H(+). In terms of biological role, glycosyltransferase which elongates the O-linked glucose attached to EGF-like repeats in the extracellular domain of Notch proteins by catalyzing the addition of xylose. The polypeptide is Glucoside xylosyltransferase 1 (Gxylt1) (Mus musculus (Mouse)).